The following is a 329-amino-acid chain: Flotillin-like protein FloA (329 aa).

Helical transmembrane passes span 5–25 (IFLL…LSFI) and 27–47 (LGLW…TLVG).

Belongs to the flotillin-like FloA family. As to quaternary structure, homooligomerizes.

The protein resides in the cell membrane. Its subcellular location is the membrane raft. Functionally, found in functional membrane microdomains (FMM) that may be equivalent to eukaryotic membrane rafts. FMMs are highly dynamic and increase in number as cells age. Flotillins are thought to be important factors in membrane fluidity. The polypeptide is Flotillin-like protein FloA (Thermoanaerobacter sp. (strain X514)).